We begin with the raw amino-acid sequence, 115 residues long: Large ribosomal subunit protein bL20 (115 aa).

It belongs to the bacterial ribosomal protein bL20 family.

Its function is as follows. Binds directly to 23S ribosomal RNA and is necessary for the in vitro assembly process of the 50S ribosomal subunit. It is not involved in the protein synthesizing functions of that subunit. This is Large ribosomal subunit protein bL20 from Salinibacter ruber (strain DSM 13855 / M31).